The chain runs to 100 residues: MVPLWWSILLGVALFVIGAGGVLLRRNILIVLMSLELLLNSVNINFIAFGQYYDDFRGQIFAIFVIAITAAEVAVALGILVALVRNKSTLKVDDVTIMKG.

3 helical membrane-spanning segments follow: residues 4–24, 28–48, and 60–80; these read LWWSILLGVALFVIGAGGVLL, ILIVLMSLELLLNSVNINFIA, and IFAIFVIAITAAEVAVALGIL.

This sequence belongs to the complex I subunit 4L family. NDH-1 is composed of 14 different subunits. Subunits NuoA, H, J, K, L, M, N constitute the membrane sector of the complex.

Its subcellular location is the cell inner membrane. It carries out the reaction a quinone + NADH + 5 H(+)(in) = a quinol + NAD(+) + 4 H(+)(out). NDH-1 shuttles electrons from NADH, via FMN and iron-sulfur (Fe-S) centers, to quinones in the respiratory chain. The immediate electron acceptor for the enzyme in this species is believed to be ubiquinone. Couples the redox reaction to proton translocation (for every two electrons transferred, four hydrogen ions are translocated across the cytoplasmic membrane), and thus conserves the redox energy in a proton gradient. This chain is NADH-quinone oxidoreductase subunit K 2, found in Rhizobium meliloti (strain 1021) (Ensifer meliloti).